We begin with the raw amino-acid sequence, 128 residues long: Small ribosomal subunit protein bS6 (128 aa).

It belongs to the bacterial ribosomal protein bS6 family.

Functionally, binds together with bS18 to 16S ribosomal RNA. This Nitratiruptor sp. (strain SB155-2) protein is Small ribosomal subunit protein bS6.